The chain runs to 81 residues: MKNSFRFSFTVITTFIICVLVSGAMVNGQCSFPQPVGPNGKCVPKDCKSLCHKKYKGGSICTTGKPNICMCLVCRRRSPEV.

The N-terminal stretch at 1-24 (MKNSFRFSFTVITTFIICVLVSGA) is a signal peptide. Intrachain disulfides connect C30/C74, C42/C61, C47/C69, and C51/C71.

It belongs to the DEFL family.

It localises to the secreted. In Arabidopsis thaliana (Mouse-ear cress), this protein is Defensin-like protein 144 (LCR10).